Here is a 990-residue protein sequence, read N- to C-terminus: MPRRSILSATERESLLALPDAKDELIRHYTFNETDLSVIRQRRGAANRLGFAVQLCYLRFPGTFLGVDEPPFPPLLRMVAAQLKMPVESWSEYGQREQTRREHLVELQTVFGFKPFTMSHYRQAVHTLTELALQTDKGIVLASALVENLRRQSIILPAMNAIERASAEAITRANRRIYAALTDSLLSPHRQRLDELLKRKDGSKVTWLAWLRQSPAKPNSRHMLEHIERLKSWQALDLPAGIERQVHQNRLLKIAREGGQMTPADLAKFEVQRRYATLVALAIEGMATVTDEIIDLHDRIIGKLFNAAKNKHQQQFQASGKAINDKVRMYGRIGQALIEAKQSGSDPFAAIEAVMPWDTFAASVTEAQTLARPADFDFLHHIGESYATLRRYAPQFLGVLKLRAAPAAKGVLDAIDMLRGMNSDSARKVPADAPTAFIKPRWAKLVLTDDGIDRRYYELCALSELKNALRSGDVWVQGSRQFKDFDEYLVPVEKFATLKLASELPLAVATDCDQYLHDRLELLEAQLATVNRMASANDLPDAIITTASGLKITPLDAAVPDAAQAMIDQTAMLLPHLKITELLMEVDEWTGFTRHFTHLKTSDTAKDKTLLLTTILADAINLGLTKMAESCPGTTYAKLSWLQAWHIRDETYSTALAELVNAQFRQPFAGNWGDGTTSSSDGQNFRTGSKAESTGHINPKYGSSPGRTFYTHISDQYAPFSAKVVNVGIRDSTYVLDGLLYHESDLRIEEHYTDTAGFTDHVFGLMHLLGFRFAPRIRDLGETKLFIPKGDAAYDALKPMISSDRLNIKQIRAHWDEILRLATSIKQGTVTASLMLRKLGSYPRQNGLAVALRELGRIERTLFILDWLQSVELRRRVHAGLNKGEARNALARAVFFYRLGEIRDRSFEQQRYRASGLNLVTAAIVLWNTVYLERATSALRGNGTALDDTLLQYLSPLGWEHINLTGDYLWRSSAKVGAGKFRPLRPLPPA.

The interval 673-698 is disordered; that stretch reads GDGTTSSSDGQNFRTGSKAESTGHIN. Polar residues predominate over residues 674-696; the sequence is DGTTSSSDGQNFRTGSKAESTGH.

Belongs to the transposase 7 family.

Required for transposition of transposon Tn3926. The sequence is that of Transposase for transposon Tn3926 (tnpA) from Escherichia coli.